A 140-amino-acid chain; its full sequence is Oocyte-expressed protein homolog (140 aa).

In terms of domain architecture, KH; atypical spans 40-101 (PLVFFLEAWL…AVQRQVKSVL (62 aa)).

It belongs to the KHDC1 family. Component of the subcortical maternal complex (SCMC), at least composed of NLRP5, KHDC3, OOEP, and TLE6. Within the complex, interacts with NLRP5, KHDC3 and TLE6. As part of the SCMC interacts with the SCMC-associated protein NLRP4F. The SCMC may facilitate translocation of its components between the nuclear and cytoplasmic compartments. Forms a scaffold complex with KHDC3/FILIA, and interacts with BLM and TRIM25 at DNA replication forks.

It is found in the cytoplasm. The protein resides in the nucleus. Component of the subcortical maternal complex (SCMC), a multiprotein complex that plays a key role in early embryonic development. The SCMC complex is a structural constituent of cytoplasmic lattices, which consist in fibrous structures found in the cytoplasm of oocytes and preimplantation embryos. They are required to store maternal proteins critical for embryonic development, such as proteins that control epigenetic reprogramming of the preimplantation embryo, and prevent their degradation or activation. As part of the OOEP-KHDC3 scaffold, recruits BLM and TRIM25 to DNA replication forks, thereby promoting the ubiquitination of BLM by TRIM25, enhancing BLM retainment at replication forks and therefore promoting stalled replication fork restart. Positively regulates the homologous recombination-mediated DNA double-strand break (DSB) repair pathway by regulating ATM activation and RAD51 recruitment to DSBs in oocytes. Thereby contributes to oocyte survival and the resumption and completion of meiosis. The protein is Oocyte-expressed protein homolog (OOEP) of Bos taurus (Bovine).